A 387-amino-acid chain; its full sequence is Probable G-protein coupled receptor 173 (387 aa).

The Extracellular segment spans residues 1–40; it reads MANGNASSDGPGNPLAAVVSTTGGVMGGAPSSAVSTYVKL. Asparagine 5 carries an N-linked (GlcNAc...) asparagine glycan. A helical transmembrane segment spans residues 41-61; the sequence is VLLGLIICISLVGNLVVSLLV. Residues 62–87 lie on the Cytoplasmic side of the membrane; sequence LRDRALHKAPYYFLLDLCLADTIRSA. The helical transmembrane segment at 88–108 threads the bilayer; the sequence is VCFPFVLVSIKNGSAWTYSVL. Topologically, residues 109–111 are extracellular; that stretch reads SCK. Cysteine 110 and cysteine 188 are disulfide-bonded. Residues 112–132 traverse the membrane as a helical segment; sequence VVAFMAVLFCFHAAFMLFCIS. Topologically, residues 133-153 are cytoplasmic; sequence VTRYMAIAHHRFYSKRMTFWT. Residues 154 to 174 traverse the membrane as a helical segment; the sequence is CVAVVCMVWTLSVAMAFPPVF. Residues 175-202 lie on the Extracellular side of the membrane; the sequence is DVGTYKFIREEDQCIFEHRYFKANDTLG. Asparagine 198 is a glycosylation site (N-linked (GlcNAc...) asparagine). The helical transmembrane segment at 203 to 223 threads the bilayer; it reads FMLMLAVLILATHVVYMKLLL. The Cytoplasmic segment spans residues 224–301; the sequence is FEYKHRKMKP…FKAEKQLGRM (78 aa). A helical membrane pass occupies residues 302 to 322; the sequence is FYVITLFFLVLWSPYIVACYW. Residues 323–335 are Extracellular-facing; it reads RVFVKACTIPHRY. A helical transmembrane segment spans residues 336–356; sequence LSTTVWMSFAQAGVNPIICFF. At 357–387 the chain is on the cytoplasmic side; that stretch reads LNKDLKKGLLAHLPPCCRTPPQLPREPYCVM.

The protein belongs to the G-protein coupled receptor 1 family.

It is found in the cell membrane. In terms of biological role, is a receptor for the SMIM20 derived peptides Phoenixin-14 and Phoenixin-20. It mediates the Phoenixin-14 and Phoenixin-20 augmentation of gonadotropin-releasing hormone (GNRH) signaling in the hypothalamus and pituitary gland. In the ovary, it mediates the effects of Phoenixin-14 and Phoenixin-20 induced granulosa cell proliferation during follicular growth. In Danio rerio (Zebrafish), this protein is Probable G-protein coupled receptor 173 (gpr173).